The primary structure comprises 501 residues: Pyruvate kinase 1 (501 aa).

Arginine 50 contacts substrate. K(+)-binding residues include asparagine 52, serine 54, aspartate 85, and threonine 86. 52–55 (NFSH) contributes to the ATP binding site. ATP-binding residues include arginine 92 and lysine 178. Glutamate 243 contributes to the Mg(2+) binding site. Glycine 266, aspartate 267, and threonine 299 together coordinate substrate. Position 267 (aspartate 267) interacts with Mg(2+).

It belongs to the pyruvate kinase family. Homotetramer. Requires Mg(2+) as cofactor. It depends on K(+) as a cofactor.

It carries out the reaction pyruvate + ATP = phosphoenolpyruvate + ADP + H(+). The protein operates within carbohydrate degradation; glycolysis; pyruvate from D-glyceraldehyde 3-phosphate: step 5/5. The polypeptide is Pyruvate kinase 1 (PYK1) (Candida glabrata (strain ATCC 2001 / BCRC 20586 / JCM 3761 / NBRC 0622 / NRRL Y-65 / CBS 138) (Yeast)).